Reading from the N-terminus, the 212-residue chain is ER lumen protein-retaining receptor (212 aa).

Topologically, residues 1–2 are lumenal; that stretch reads MN. Residues 3–21 form a helical membrane-spanning segment; that stretch reads IFRFAGDLSHVFAIIILLL. Residues 22–35 lie on the Cytoplasmic side of the membrane; the sequence is KIWKTRSCAGISGK. A helical transmembrane segment spans residues 36-53; that stretch reads SQILFAVVYLTRYLDLFT. Topologically, residues 54–61 are lumenal; the sequence is TYVSLYNS. The helical transmembrane segment at 62–80 threads the bilayer; sequence VMKVLFLATSGATVYLMYV. Over 81-96 the chain is Cytoplasmic; sequence KFKATYDHNHDSFRIE. A helical transmembrane segment spans residues 97–110; sequence FLLVPCALLSLVIN. Residues 111 to 117 lie on the Lumenal side of the membrane; sequence HEFTVME. The chain crosses the membrane as a helical span at residues 118–137; sequence VLWTFSIYLESVAILPQLFL. Residues 138–149 lie on the Cytoplasmic side of the membrane; it reads VSRTGEAESITS. A helical transmembrane segment spans residues 150–168; that stretch reads HYLFALGSYRALYLLNWVY. Residues 169–178 are Lumenal-facing; sequence RYMVESHYDL. The helical transmembrane segment at 179–199 threads the bilayer; sequence IAIFAGVVQTVLYCDFFYLYI. Residues 200-212 lie on the Cytoplasmic side of the membrane; the sequence is TKVLKGKKLQLPA.

It belongs to the ERD2 family.

Its subcellular location is the endoplasmic reticulum membrane. Required for the retention of luminal endoplasmic reticulum proteins. Determines the specificity of the luminal ER protein retention system. Also required for normal vesicular traffic through the Golgi. The sequence is that of ER lumen protein-retaining receptor (KdelR) from Drosophila melanogaster (Fruit fly).